The chain runs to 1012 residues: Isoleucine--tRNA ligase, mitochondrial (1012 aa).

The transit peptide at 1 to 48 (MHWGLCPRGPGAAAVAAAGSFWGPARLPSRLGCLGMTRRLVVRSVAGA) directs the protein to the mitochondrion. N6-succinyllysine is present on Lys-56. Lys-74 is subject to N6-acetyllysine; alternate. An N6-succinyllysine; alternate modification is found at Lys-74. The 'HIGH' region motif lies at 116-126 (PYANGDPHVGH). Position 194 is an N6-succinyllysine (Lys-194). Lys-233 carries the N6-acetyllysine modification. Residue Lys-241 is modified to N6-acetyllysine; alternate. At Lys-241 the chain carries N6-succinyllysine; alternate. Lys-479 and Lys-500 each carry N6-succinyllysine. 2 residues coordinate ATP: Lys-664 and Lys-667. The 'KMSKS' region motif lies at 664-668 (KMSKS). N6-acetyllysine is present on Lys-725. Lys-775 and Lys-781 each carry N6-acetyllysine; alternate. N6-succinyllysine; alternate occurs at positions 775 and 781.

The protein belongs to the class-I aminoacyl-tRNA synthetase family.

The protein localises to the mitochondrion matrix. The catalysed reaction is tRNA(Ile) + L-isoleucine + ATP = L-isoleucyl-tRNA(Ile) + AMP + diphosphate. Functionally, aminoacyl-tRNA synthetase that catalyzes the specific attachment of isoleucine to its cognate tRNA (tRNA(Ile)). In Mus musculus (Mouse), this protein is Isoleucine--tRNA ligase, mitochondrial.